The primary structure comprises 273 residues: Tryptophan synthase alpha chain (273 aa).

Residues E56 and D67 each act as proton acceptor in the active site.

Belongs to the TrpA family. As to quaternary structure, tetramer of two alpha and two beta chains.

It carries out the reaction (1S,2R)-1-C-(indol-3-yl)glycerol 3-phosphate + L-serine = D-glyceraldehyde 3-phosphate + L-tryptophan + H2O. It participates in amino-acid biosynthesis; L-tryptophan biosynthesis; L-tryptophan from chorismate: step 5/5. Functionally, the alpha subunit is responsible for the aldol cleavage of indoleglycerol phosphate to indole and glyceraldehyde 3-phosphate. The protein is Tryptophan synthase alpha chain of Shewanella baltica (strain OS155 / ATCC BAA-1091).